Consider the following 289-residue polypeptide: MAIVGTILFAFYSVAIAAAWFFFGQNQTILAIAIVGSVVLVGVQYKVGKWMALRSVGAEDMDEQEFPRIHRRVESLSRDMGIKKPTLKVANMGVPNAFAVGRKGNGTVVVSRELIDILEHEELDGVLAHELSHIANRDVVTMQLGQGIASIVGIVAQYIVLFSGDNDLADFFLAIVVGNLVQFLVTLFVLAISRYREYVADADARRAIGTGEPLARALEKISQGNEQAAQQQRQRTSRGRGRRQRGQRNDDGLDQQVSALCISSPDTSVLQKLVSTHPPTEKRIQRLRS.

2 helical membrane passes run 3 to 23 (IVGT…WFFF) and 28 to 48 (TILA…YKVG). Histidine 129 serves as a coordination point for Zn(2+). Residue glutamate 130 is part of the active site. Histidine 133 lines the Zn(2+) pocket. A run of 2 helical transmembrane segments spans residues 144-164 (LGQG…LFSG) and 172-192 (FLAI…VLAI). Zn(2+) is bound at residue glutamate 197. The disordered stretch occupies residues 222–250 (SQGNEQAAQQQRQRTSRGRGRRQRGQRND). A compositionally biased stretch (basic residues) spans 235–246 (RTSRGRGRRQRG).

Belongs to the peptidase M48B family. Zn(2+) is required as a cofactor.

It localises to the cell membrane. The sequence is that of Protease HtpX homolog from Halobacterium salinarum (strain ATCC 700922 / JCM 11081 / NRC-1) (Halobacterium halobium).